The chain runs to 198 residues: MYDYIKGQLTKITAKYIVVEANGLGYMINVANPYSFTDSVNQLVTIYLHQVIREDAHLLFGFHTEDEKDVFLKLISVSGIGPTTALAIVAVDDNEGLVNAIDNSDIKYLMKFPKIGKKTAQQMVLDLAGKFVEAPQETGHTKARSNKAGNTQLDEAIEALLALGYKAKELKKIRAFFEETSETAEQYIKSALKLLMKG.

The domain I stretch occupies residues 1-63 (MYDYIKGQLT…EDAHLLFGFH (63 aa)). A domain II region spans residues 64–142 (TEDEKDVFLK…EAPQETGHTK (79 aa)). The interval 143 to 147 (ARSNK) is flexible linker. A domain III region spans residues 148 to 198 (AGNTQLDEAIEALLALGYKAKELKKIRAFFEETSETAEQYIKSALKLLMKG).

This sequence belongs to the RuvA family. As to quaternary structure, homotetramer. Forms an RuvA(8)-RuvB(12)-Holliday junction (HJ) complex. HJ DNA is sandwiched between 2 RuvA tetramers; dsDNA enters through RuvA and exits via RuvB. An RuvB hexamer assembles on each DNA strand where it exits the tetramer. Each RuvB hexamer is contacted by two RuvA subunits (via domain III) on 2 adjacent RuvB subunits; this complex drives branch migration. In the full resolvosome a probable DNA-RuvA(4)-RuvB(12)-RuvC(2) complex forms which resolves the HJ.

The protein localises to the cytoplasm. Its function is as follows. The RuvA-RuvB-RuvC complex processes Holliday junction (HJ) DNA during genetic recombination and DNA repair, while the RuvA-RuvB complex plays an important role in the rescue of blocked DNA replication forks via replication fork reversal (RFR). RuvA specifically binds to HJ cruciform DNA, conferring on it an open structure. The RuvB hexamer acts as an ATP-dependent pump, pulling dsDNA into and through the RuvAB complex. HJ branch migration allows RuvC to scan DNA until it finds its consensus sequence, where it cleaves and resolves the cruciform DNA. This chain is Holliday junction branch migration complex subunit RuvA, found in Streptococcus pyogenes serotype M2 (strain MGAS10270).